Here is a 320-residue protein sequence, read N- to C-terminus: Ferrochelatase (320 aa).

Fe cation is bound by residues His-194 and Glu-275.

Belongs to the ferrochelatase family.

It is found in the cytoplasm. The catalysed reaction is heme b + 2 H(+) = protoporphyrin IX + Fe(2+). The protein operates within porphyrin-containing compound metabolism; protoheme biosynthesis; protoheme from protoporphyrin-IX: step 1/1. Its function is as follows. Catalyzes the ferrous insertion into protoporphyrin IX. In Vibrio parahaemolyticus serotype O3:K6 (strain RIMD 2210633), this protein is Ferrochelatase.